The primary structure comprises 662 residues: Probable quinol oxidase subunit 1 (662 aa).

The next 2 membrane-spanning stretches (helical) occupy residues 14–34 (WMITMAQIGAPFLVIGLIAVI) and 58–78 (VMYLICAVLMFVRGGIDALLI). A Fe(II)-heme a-binding site is contributed by H102. A run of 8 helical transmembrane segments spans residues 103–123 (GVIMIIFMAMPFIFGLWNIVV), 140–160 (VSFWLFFAGMILFNLSFIIGG), 187–207 (IAIQISGLGTLATGINFFVTI), 228–248 (FITTLIVILAFPPLTVALALM), 273–293 (FFWVWGHPEVYIVILPAFGIY), 311–331 (MVWATAGIAFLSFLVWVHHFF), 336–356 (GALINSFFSISTMLIGIPTGV), and 376–396 (MLFSLAFIPNFLLGGVTGVML). The Cu cation site is built by H279, Y283, H328, and H329. The 1'-histidyl-3'-tyrosine (His-Tyr) cross-link spans 279–283 (HPEVY). H414 lines the heme a3 pocket. Transmembrane regions (helical) follow at residues 415–435 (FHYTLVTGVVFACLAGLIFWY), 451–471 (CFWFFMIGFNVCFLPQFILGL), 493–513 (ISTIGALLMAIGFLFLVVSIV), 587–604 (PVGFWIGIFMTIGGFFLI), and 608–627 (VIPALICLFGIFGTMIYRSF). H416 serves as a coordination point for Fe(II)-heme a.

The protein belongs to the heme-copper respiratory oxidase family. The cofactor is Cu cation. Ferriheme a serves as cofactor. It depends on Heme A3. as a cofactor.

Its subcellular location is the cell membrane. It catalyses the reaction 2 a quinol + O2 = 2 a quinone + 2 H2O. It functions in the pathway energy metabolism; oxidative phosphorylation. Functionally, catalyzes quinol oxidation with the concomitant reduction of oxygen to water. This chain is Probable quinol oxidase subunit 1 (qoxB), found in Staphylococcus aureus (strain COL).